The primary structure comprises 246 residues: Probable transcriptional regulatory protein YebC (246 aa).

The disordered stretch occupies residues Met1–Lys20.

The protein belongs to the TACO1 family.

It is found in the cytoplasm. The polypeptide is Probable transcriptional regulatory protein YebC (Shigella boydii serotype 4 (strain Sb227)).